The following is an 804-amino-acid chain: MSMHRVARAVASSEACAGALRGSVSRTRFLCLNAPVQRFGARNALLGAGLGAKRHFFQSPIIRSGVAQAVLEKAAADPSALTQEAIVDNLNAAERDRLRRVRNIGIAAHIDSGKTTATERVLFYTGRINAIHEVRGKDAVGAKMDSMELEREKGITIQSAATFCDWMKVENGKEEKYHINLIDTPGHIDFTIEVERALRVLDGAVMILCAVSGVQSQTITVDRQMRRYNVPRISFINKMDRMGANPFKAVEQINQKLRIPAAALQVPIGSEDSFNGVVDLIRMKAIYNDGPKGEIIRETDEIPEELKQLCKEKRALLIETLADVDDEIAEIFLDEKTPSIEQMKAAIRRATINLKFTPVLMGSALADKSVQPMLDAVCDYLPNPAEVENLALDKRRAEAPVKLVSYNELPFVGLAFKLEESNYGQLTYIRVYQGSLRKGMNVFNARTDKRVKIPRIVRMHSNEMEEVPEIGAGEICAVFGVDCASGDTFTDGGLPYSMSSMFVPDPVISLSIKPKTTKDGSNFSKAMNRFQREDPTFRVHVDAESQETIISGMGELHLDIYVERMRREYKVEVETGKPQVAYRETITEHVTFDHTLKKQTGGAGDYARVVGFLEPIEAGPNGYAPSTFKEEVTGGSISDKFLFACEKGFLASCEKGPLLGHPVLGTHMVVNDGATHMTDSSEMAFKNATQQAFRKAFKEGKPQVLEPLMKTTITAPNEFQGNIVGLLNKRNAIISDTEIGPEDFTLIADCSLNAMFGFSSQLRAATQGKGEFGMEFSHYAPAPGQLQKELISNYEKAQADRHKK.

Residues 1–63 constitute a mitochondrion transit peptide; that stretch reads MSMHRVARAV…RHFFQSPIIR (63 aa). A tr-type G domain is found at 99-385; that stretch reads RRVRNIGIAA…AVCDYLPNPA (287 aa). GTP contacts are provided by residues 108–115, 183–187, and 237–240; these read AHIDSGKT, DTPGH, and NKMD.

It belongs to the TRAFAC class translation factor GTPase superfamily. Classic translation factor GTPase family. EF-G/EF-2 subfamily.

It localises to the mitochondrion. Its pathway is protein biosynthesis; polypeptide chain elongation. Mitochondrial GTPase that catalyzes the GTP-dependent ribosomal translocation step during translation elongation. During this step, the ribosome changes from the pre-translocational (PRE) to the post-translocational (POST) state as the newly formed A-site-bound peptidyl-tRNA and P-site-bound deacylated tRNA move to the P and E sites, respectively. Catalyzes the coordinated movement of the two tRNA molecules, the mRNA and conformational changes in the ribosome. This Sclerotinia sclerotiorum (strain ATCC 18683 / 1980 / Ss-1) (White mold) protein is Elongation factor G, mitochondrial (mef1).